A 473-amino-acid polypeptide reads, in one-letter code: Trigger factor (473 aa).

The PPIase FKBP-type domain maps to 162–243; sequence GDFVSIDLSA…VKSIKVRELP (82 aa). The disordered stretch occupies residues 433–473; it reads TAEFFGPSGEQAEAEQDEAAPAEDATEETDADSDEAADDSK. The segment covering 444–473 has biased composition (acidic residues); sequence AEAEQDEAAPAEDATEETDADSDEAADDSK.

It belongs to the FKBP-type PPIase family. Tig subfamily.

It is found in the cytoplasm. The catalysed reaction is [protein]-peptidylproline (omega=180) = [protein]-peptidylproline (omega=0). Its function is as follows. Involved in protein export. Acts as a chaperone by maintaining the newly synthesized protein in an open conformation. Functions as a peptidyl-prolyl cis-trans isomerase. This chain is Trigger factor, found in Mycolicibacterium vanbaalenii (strain DSM 7251 / JCM 13017 / BCRC 16820 / KCTC 9966 / NRRL B-24157 / PYR-1) (Mycobacterium vanbaalenii).